A 346-amino-acid chain; its full sequence is Putative agmatine deiminase (346 aa).

Cysteine 338 functions as the Amidino-cysteine intermediate in the catalytic mechanism.

Belongs to the agmatine deiminase family.

It catalyses the reaction agmatine + H2O = N-carbamoylputrescine + NH4(+). The polypeptide is Putative agmatine deiminase (Streptomyces avermitilis (strain ATCC 31267 / DSM 46492 / JCM 5070 / NBRC 14893 / NCIMB 12804 / NRRL 8165 / MA-4680)).